Reading from the N-terminus, the 694-residue chain is Lamina-associated polypeptide 2, isoform alpha (694 aa).

The LEM-like domain maps to Leu-5–Arg-48. Disordered regions lie at residues Ala-47–Asn-117 and Arg-150–Leu-209. Residues Asn-49–Asp-108 are linker. Thr-57 is modified (phosphothreonine). Residues Ser-59, Ser-66, and Ser-67 each carry the phosphoserine modification. At Thr-74 the chain carries Phosphothreonine. Residues Gly-78–Arg-93 show a composition bias toward low complexity. Ser-79 bears the Phosphoserine mark. An omega-N-methylarginine mark is found at Arg-86 and Arg-88. Positions Lys-97–Asp-106 are enriched in basic and acidic residues. Residues Lys-107 to Asn-117 show a composition bias toward acidic residues. The 45-residue stretch at Asp-109–Gly-153 folds into the LEM domain. Thr-154 bears the Phosphothreonine mark. Over residues Glu-155–Asn-178 the composition is skewed to polar residues. Phosphoserine occurs at positions 156 and 159. Phosphothreonine is present on residues Thr-160 and Thr-164. Phosphoserine is present on residues Ser-166 and Ser-168. The span at Asp-179 to Lys-191 shows a compositional bias: basic and acidic residues. The Nuclear localization signal motif lies at Lys-190–Lys-196. Phosphoserine is present on residues Ser-272, Ser-312, Ser-351, Ser-354, Ser-370, and Ser-424. Residues Gln-338 to Leu-368 are disordered. Residues Thr-558–Asp-657 are a coiled coil. Lys-656 carries the post-translational modification N6-acetyllysine.

This sequence belongs to the LEM family. As to quaternary structure, interacts with LMNA, BANF1 and RB1 and with chromosomes. Associates directly or indirectly with lamins at specific cell-cycle stages. Interacts with CMTM6. Post-translationally, phosphorylated in a mitose-specific manner. As to expression, expressed in many tissues. Most abundant in adult thymus and fetal liver.

It is found in the nucleus. The protein resides in the chromosome. In terms of biological role, may be involved in the structural organization of the nucleus and in the post-mitotic nuclear assembly. Plays an important role, together with LMNA, in the nuclear anchorage of RB1. TP and TP5 may play a role in T-cell development and function. TP5 is an immunomodulating pentapeptide. This Homo sapiens (Human) protein is Lamina-associated polypeptide 2, isoform alpha (TMPO).